A 297-amino-acid chain; its full sequence is tRNA pseudouridine synthase A (297 aa).

Catalysis depends on Asp-57, which acts as the Nucleophile. Tyr-115 serves as a coordination point for substrate.

It belongs to the tRNA pseudouridine synthase TruA family. In terms of assembly, homodimer.

It catalyses the reaction uridine(38/39/40) in tRNA = pseudouridine(38/39/40) in tRNA. In terms of biological role, formation of pseudouridine at positions 38, 39 and 40 in the anticodon stem and loop of transfer RNAs. The chain is tRNA pseudouridine synthase A from Nitratidesulfovibrio vulgaris (strain ATCC 29579 / DSM 644 / CCUG 34227 / NCIMB 8303 / VKM B-1760 / Hildenborough) (Desulfovibrio vulgaris).